Consider the following 293-residue polypeptide: Ribosomal RNA small subunit methyltransferase H (293 aa).

S-adenosyl-L-methionine-binding positions include 31 to 33 (GGY), Asp49, Phe76, Asp97, and Gln104.

The protein belongs to the methyltransferase superfamily. RsmH family.

It localises to the cytoplasm. The enzyme catalyses cytidine(1402) in 16S rRNA + S-adenosyl-L-methionine = N(4)-methylcytidine(1402) in 16S rRNA + S-adenosyl-L-homocysteine + H(+). In terms of biological role, specifically methylates the N4 position of cytidine in position 1402 (C1402) of 16S rRNA. The chain is Ribosomal RNA small subunit methyltransferase H from Wolbachia sp. subsp. Drosophila simulans (strain wRi).